The chain runs to 445 residues: 3-phosphoshikimate 1-carboxyvinyltransferase (445 aa).

The disordered stretch occupies residues M1 to P25. 3-phosphoshikimate contacts are provided by K28, S29, and R33. Position 28 (K28) interacts with phosphoenolpyruvate. Phosphoenolpyruvate is bound by residues G101 and R129. 3-phosphoshikimate contacts are provided by S174, Q176, D326, and K353. A phosphoenolpyruvate-binding site is contributed by Q176. The active-site Proton acceptor is the D326. Phosphoenolpyruvate contacts are provided by R357 and R400.

Belongs to the EPSP synthase family. As to quaternary structure, monomer.

It localises to the cytoplasm. The catalysed reaction is 3-phosphoshikimate + phosphoenolpyruvate = 5-O-(1-carboxyvinyl)-3-phosphoshikimate + phosphate. The protein operates within metabolic intermediate biosynthesis; chorismate biosynthesis; chorismate from D-erythrose 4-phosphate and phosphoenolpyruvate: step 6/7. Its function is as follows. Catalyzes the transfer of the enolpyruvyl moiety of phosphoenolpyruvate (PEP) to the 5-hydroxyl of shikimate-3-phosphate (S3P) to produce enolpyruvyl shikimate-3-phosphate and inorganic phosphate. In Cereibacter sphaeroides (strain ATCC 17029 / ATH 2.4.9) (Rhodobacter sphaeroides), this protein is 3-phosphoshikimate 1-carboxyvinyltransferase.